Consider the following 1037-residue polypeptide: Presequence protease, mitochondrial (1037 aa).

The N-terminal 15 residues, M1–R15, are a transit peptide targeting the mitochondrion. H104 contributes to the Zn(2+) binding site. E107 serves as the catalytic Proton acceptor. Zn(2+) is bound by residues H108 and E205. Residues C119 and C556 are joined by a disulfide bond. At K759 the chain carries N6-acetyllysine. K770 carries the post-translational modification N6-acetyllysine; alternate. K770 is modified (N6-succinyllysine; alternate). The tract at residues I803–H834 is disordered. Residues G804–R814 are compositionally biased toward basic residues. An N6-succinyllysine modification is found at K849. K884 is subject to N6-acetyllysine. Position 946 is an N6-succinyllysine (K946).

The protein belongs to the peptidase M16 family. PreP subfamily. Monomer and homodimer; homodimerization is induced by binding of the substrate. Zn(2+) is required as a cofactor. Post-translationally, a disulfide bond locks the enzyme in the closed conformation preventing substrate entry into the catalytic chamber.

Its subcellular location is the mitochondrion matrix. Its activity is regulated as follows. Mainly exists in a closed and catalytically competent conformation but a closed-to-open switch allows substrate entry into the catalytic chamber. Substrate binding induces closure and dimerization. A disulfide bond may lock the enzyme in a closed conformation preventing substrate entry into the catalytic chamber, participating in redox regulation of the enzyme. Inhibited by metal-chelating agents. Inhibited by nickel and zinc excess, and slightly activated by manganese. Its function is as follows. Metalloendopeptidase of the mitochondrial matrix that functions in peptide cleavage and degradation rather than in protein processing. Has an ATP-independent activity. Specifically cleaves peptides in the range of 5 to 65 residues. Shows a preference for cleavage after small polar residues and before basic residues, but without any positional preference. Degrades the transit peptides of mitochondrial proteins after their cleavage. Also degrades other unstructured peptides. It is also able to degrade amyloid-beta protein 40, one of the peptides produced by APP processing, when it accumulates in mitochondrion. It is a highly efficient protease, at least toward amyloid-beta protein 40. Cleaves that peptide at a specific position and is probably not processive, releasing digested peptides intermediates that can be further cleaved subsequently. It is also able to degrade amyloid-beta protein 42. The chain is Presequence protease, mitochondrial from Pongo abelii (Sumatran orangutan).